A 203-amino-acid chain; its full sequence is UPF0637 protein SSP1683 (203 aa).

Belongs to the UPF0637 family.

The protein is UPF0637 protein SSP1683 of Staphylococcus saprophyticus subsp. saprophyticus (strain ATCC 15305 / DSM 20229 / NCIMB 8711 / NCTC 7292 / S-41).